The following is a 71-amino-acid chain: Small ribosomal subunit protein bS21 (71 aa).

The interval 48–71 (ENATLAKRHAKRNARENARNTRLY) is disordered. Residues 60-71 (NARENARNTRLY) are compositionally biased toward basic and acidic residues.

Belongs to the bacterial ribosomal protein bS21 family.

This Haemophilus influenzae (strain 86-028NP) protein is Small ribosomal subunit protein bS21.